A 267-amino-acid polypeptide reads, in one-letter code: Phosphate import ATP-binding protein PstB (267 aa).

Positions 21-262 constitute an ABC transporter domain; it reads VAARNLDFYY…PSKQQTEDYI (242 aa). 53-60 serves as a coordination point for ATP; that stretch reads GPSGCGKS.

Belongs to the ABC transporter superfamily. Phosphate importer (TC 3.A.1.7) family. In terms of assembly, the complex is composed of two ATP-binding proteins (PstB), two transmembrane proteins (PstC and PstA) and a solute-binding protein (PstS).

The protein resides in the cell inner membrane. The enzyme catalyses phosphate(out) + ATP + H2O = ADP + 2 phosphate(in) + H(+). In terms of biological role, part of the ABC transporter complex PstSACB involved in phosphate import. Responsible for energy coupling to the transport system. The sequence is that of Phosphate import ATP-binding protein PstB from Xanthomonas euvesicatoria pv. vesicatoria (strain 85-10) (Xanthomonas campestris pv. vesicatoria).